A 380-amino-acid polypeptide reads, in one-letter code: Cytochrome b (380 aa).

4 helical membrane passes run 33–53 (FGSLLGLCLATQILTGLFLAM), 77–98 (WLIRNIHANGASFFFICIYMHI), 113–133 (WNIGVVLLLLTMMTAFVGYVL), and 178–198 (FFAFHFLFPFVIAAATVLHLL). 2 residues coordinate heme b: histidine 83 and histidine 97. Heme b-binding residues include histidine 182 and histidine 196. Histidine 201 lines the a ubiquinone pocket. 4 consecutive transmembrane segments (helical) span residues 226-246 (YKDLLGFVAMLLGLTSLALFA), 288-308 (LGGVLALLFSILVLMVVPILH), 320-340 (LTQFLFWTLVADMLILTWIGG), and 347-367 (FIIIGQVASVIYFTIFLVLAP).

Belongs to the cytochrome b family. In terms of assembly, the cytochrome bc1 complex contains 3 respiratory subunits (MT-CYB, CYC1 and UQCRFS1), 2 core proteins (UQCRC1 and UQCRC2) and probably 6 low-molecular weight proteins. Heme b serves as cofactor.

The protein localises to the mitochondrion inner membrane. In terms of biological role, component of the ubiquinol-cytochrome c reductase complex (complex III or cytochrome b-c1 complex) that is part of the mitochondrial respiratory chain. The b-c1 complex mediates electron transfer from ubiquinol to cytochrome c. Contributes to the generation of a proton gradient across the mitochondrial membrane that is then used for ATP synthesis. This Salmo trutta (Brown trout) protein is Cytochrome b (mt-cyb).